The sequence spans 217 residues: Thiamine-phosphate synthase (217 aa).

4-amino-2-methyl-5-(diphosphooxymethyl)pyrimidine-binding positions include 39–43 and asparagine 71; that span reads QYRDK. Mg(2+) contacts are provided by aspartate 72 and aspartate 91. Residue threonine 110 participates in 4-amino-2-methyl-5-(diphosphooxymethyl)pyrimidine binding. Residue 137–139 participates in 2-[(2R,5Z)-2-carboxy-4-methylthiazol-5(2H)-ylidene]ethyl phosphate binding; the sequence is SNT. Lysine 140 provides a ligand contact to 4-amino-2-methyl-5-(diphosphooxymethyl)pyrimidine. Glycine 167 is a 2-[(2R,5Z)-2-carboxy-4-methylthiazol-5(2H)-ylidene]ethyl phosphate binding site.

It belongs to the thiamine-phosphate synthase family. Mg(2+) serves as cofactor.

It carries out the reaction 2-[(2R,5Z)-2-carboxy-4-methylthiazol-5(2H)-ylidene]ethyl phosphate + 4-amino-2-methyl-5-(diphosphooxymethyl)pyrimidine + 2 H(+) = thiamine phosphate + CO2 + diphosphate. The catalysed reaction is 2-(2-carboxy-4-methylthiazol-5-yl)ethyl phosphate + 4-amino-2-methyl-5-(diphosphooxymethyl)pyrimidine + 2 H(+) = thiamine phosphate + CO2 + diphosphate. It catalyses the reaction 4-methyl-5-(2-phosphooxyethyl)-thiazole + 4-amino-2-methyl-5-(diphosphooxymethyl)pyrimidine + H(+) = thiamine phosphate + diphosphate. Its pathway is cofactor biosynthesis; thiamine diphosphate biosynthesis; thiamine phosphate from 4-amino-2-methyl-5-diphosphomethylpyrimidine and 4-methyl-5-(2-phosphoethyl)-thiazole: step 1/1. Its function is as follows. Condenses 4-methyl-5-(beta-hydroxyethyl)thiazole monophosphate (THZ-P) and 2-methyl-4-amino-5-hydroxymethyl pyrimidine pyrophosphate (HMP-PP) to form thiamine monophosphate (TMP). The protein is Thiamine-phosphate synthase of Saccharophagus degradans (strain 2-40 / ATCC 43961 / DSM 17024).